We begin with the raw amino-acid sequence, 90 residues long: UPF0213 protein lin0209 (90 aa).

The GIY-YIG domain occupies 5–80; it reads NEHFFYVLKC…KKLSRKNKDS (76 aa).

Belongs to the UPF0213 family.

The polypeptide is UPF0213 protein lin0209 (Listeria innocua serovar 6a (strain ATCC BAA-680 / CLIP 11262)).